The sequence spans 342 residues: Holliday junction branch migration complex subunit RuvB (342 aa).

Residues 1–184 are large ATPase domain (RuvB-L); it reads MDNERVITAV…FGIVQRLEFY (184 aa). ATP is bound by residues I23, R24, G65, K68, T69, T70, 131 to 133, R174, Y184, and R221; that span reads EDY. T69 is a Mg(2+) binding site. Residues 185–255 form a small ATPAse domain (RuvB-S) region; it reads SVDDLSGIVS…IAQRALDMLE (71 aa). The interval 258–342 is head domain (RuvB-H); it reads SCGLDGTDRR…PRQDGDLFND (85 aa). DNA contacts are provided by R313 and R318.

It belongs to the RuvB family. In terms of assembly, homohexamer. Forms an RuvA(8)-RuvB(12)-Holliday junction (HJ) complex. HJ DNA is sandwiched between 2 RuvA tetramers; dsDNA enters through RuvA and exits via RuvB. An RuvB hexamer assembles on each DNA strand where it exits the tetramer. Each RuvB hexamer is contacted by two RuvA subunits (via domain III) on 2 adjacent RuvB subunits; this complex drives branch migration. In the full resolvosome a probable DNA-RuvA(4)-RuvB(12)-RuvC(2) complex forms which resolves the HJ.

The protein resides in the cytoplasm. The enzyme catalyses ATP + H2O = ADP + phosphate + H(+). The RuvA-RuvB-RuvC complex processes Holliday junction (HJ) DNA during genetic recombination and DNA repair, while the RuvA-RuvB complex plays an important role in the rescue of blocked DNA replication forks via replication fork reversal (RFR). RuvA specifically binds to HJ cruciform DNA, conferring on it an open structure. The RuvB hexamer acts as an ATP-dependent pump, pulling dsDNA into and through the RuvAB complex. RuvB forms 2 homohexamers on either side of HJ DNA bound by 1 or 2 RuvA tetramers; 4 subunits per hexamer contact DNA at a time. Coordinated motions by a converter formed by DNA-disengaged RuvB subunits stimulates ATP hydrolysis and nucleotide exchange. Immobilization of the converter enables RuvB to convert the ATP-contained energy into a lever motion, pulling 2 nucleotides of DNA out of the RuvA tetramer per ATP hydrolyzed, thus driving DNA branch migration. The RuvB motors rotate together with the DNA substrate, which together with the progressing nucleotide cycle form the mechanistic basis for DNA recombination by continuous HJ branch migration. Branch migration allows RuvC to scan DNA until it finds its consensus sequence, where it cleaves and resolves cruciform DNA. This chain is Holliday junction branch migration complex subunit RuvB, found in Alcanivorax borkumensis (strain ATCC 700651 / DSM 11573 / NCIMB 13689 / SK2).